We begin with the raw amino-acid sequence, 481 residues long: Phloretin 4'-O-glucosyltransferase (481 aa).

Histidine 16 functions as the Proton acceptor in the catalytic mechanism. Residue histidine 16 coordinates an anthocyanidin. Residues glutamine 354, histidine 369, tryptophan 372, asparagine 373, serine 374, glutamate 377, aspartate 393, and glutamine 394 each contribute to the UDP-alpha-D-glucose site.

The protein belongs to the UDP-glycosyltransferase family. Highly expressed in young leaves, at intermediate level in mature leaves and at low levels in flowers and fruits.

The catalysed reaction is phloretin + UDP-alpha-D-glucose = trilobatin + UDP + H(+). The enzyme catalyses (2S)-naringenin + UDP-alpha-D-glucose = (2S)-naringenin 7-O-beta-D-glucoside + UDP + H(+). Glycosyltransferase that possesses phloretin 4'-O-glycosyltransferase activity. Converts phloretin to trilobatin (phloretin 4'-O-glucoside), a potential antioxidant. Can convert with low efficiency phlorizin and trilobatin to their corresponding di-O-glucosides. Can convert with low efficiency naringenin to naringenin-7-O-glucoside. Can convert with low efficiency quercetin to quercetin-7-O-glucoside. This is Phloretin 4'-O-glucosyltransferase from Malus domestica (Apple).